Here is a 313-residue protein sequence, read N- to C-terminus: Olfactory receptor 5D18 (313 aa).

Residues 1-26 are Extracellular-facing; the sequence is MLLTDRNTSGTTFTLLGFSDYPELQV. An N-linked (GlcNAc...) asparagine glycan is attached at Asn7. A helical membrane pass occupies residues 27–47; it reads PLFLVFLAIYNVTVLGNIGLI. At 48-55 the chain is on the cytoplasmic side; it reads VIIKINPK. Residues 56 to 76 traverse the membrane as a helical segment; it reads LHTPMYFFLSQLSFVDFCYSS. Residues 77–100 are Extracellular-facing; that stretch reads IIAPKMLVNLVVKDRTISFLGCVV. An intrachain disulfide couples Cys98 to Cys190. The chain crosses the membrane as a helical span at residues 101-121; sequence QFFFFCTFVVTESFLLAVMAY. Topologically, residues 122 to 140 are cytoplasmic; it reads DRFVAICNPLLYTVNMSQK. A helical membrane pass occupies residues 141 to 161; sequence LCVLLVVGSYAWGVSCSLELT. The Extracellular segment spans residues 162 to 197; sequence CSALKLCFHGFNTINHFFCEFSSLLSLSCSDTYINQ. A helical transmembrane segment spans residues 198-218; sequence WLLFFLATFNEISTLLIVLTS. Topologically, residues 219–238 are cytoplasmic; it reads YAFIVVTILKMRSVSGRRKA. Residues 239–259 traverse the membrane as a helical segment; it reads FSTCASHLTAITIFHGTILFL. Residues 260-272 lie on the Extracellular side of the membrane; it reads YCVPNSKNSRHTV. The chain crosses the membrane as a helical span at residues 273-293; it reads KVASVFYTVVIPMLNPLIYSL. Topologically, residues 294 to 313 are cytoplasmic; that stretch reads RNKDVKDTVTEILDTKVFSY.

It belongs to the G-protein coupled receptor 1 family.

The protein localises to the cell membrane. Odorant receptor. The protein is Olfactory receptor 5D18 (OR5D18) of Homo sapiens (Human).